We begin with the raw amino-acid sequence, 208 residues long: Protein-L-isoaspartate O-methyltransferase (208 aa).

The active site involves Ser59.

The protein belongs to the methyltransferase superfamily. L-isoaspartyl/D-aspartyl protein methyltransferase family. As to quaternary structure, monomer.

It is found in the cytoplasm. The catalysed reaction is [protein]-L-isoaspartate + S-adenosyl-L-methionine = [protein]-L-isoaspartate alpha-methyl ester + S-adenosyl-L-homocysteine. Catalyzes the methyl esterification of L-isoaspartyl residues in peptides and proteins that result from spontaneous decomposition of normal L-aspartyl and L-asparaginyl residues. It plays a role in the repair and/or degradation of damaged proteins. The protein is Protein-L-isoaspartate O-methyltransferase (pcm) of Shigella flexneri.